An 89-amino-acid polypeptide reads, in one-letter code: DNA-binding protein HU (89 aa).

This sequence belongs to the bacterial histone-like protein family. Homodimer. The dimer interacts with the DNA mimic protein DMP12. It also interacts with the monomeric form of the DNA mimic protein DMP19 with 1:1 stoichiometry.

Activity is regulated by the DNA mimic protein DMP12. Activity is inhibited in the presence of the DNA mimic protein DMP19, which interacts with HU and prevents the binding of HU to DNA. Its function is as follows. Histone-like DNA-binding protein which is capable of wrapping DNA to stabilize it, and thus to prevent its denaturation under extreme environmental conditions. This is DNA-binding protein HU from Neisseria meningitidis serogroup B (strain ATCC BAA-335 / MC58).